The primary structure comprises 241 residues: Ribosome assembly factor mrt4 (241 aa).

This sequence belongs to the universal ribosomal protein uL10 family. In terms of assembly, associates with the pre-60S ribosomal particle.

The protein localises to the nucleus. Its subcellular location is the nucleolus. It is found in the cytoplasm. Component of the ribosome assembly machinery. Nuclear paralog of the ribosomal protein P0, it binds pre-60S subunits at an early stage of assembly in the nucleolus, and is replaced by P0 in cytoplasmic pre-60S subunits and mature 80S ribosomes. This is Ribosome assembly factor mrt4 from Schizosaccharomyces pombe (strain 972 / ATCC 24843) (Fission yeast).